A 347-amino-acid polypeptide reads, in one-letter code: MSYKIVALPGDGIGPEILSGTLELLKLISEKYHFEYHLESHHFGGVSIDYYGTPLTNETLQSCKNADAILLGAIGGPKWTDPNNRPEHGLLKLRKSLNLFANIRPTFVTKGASHLSPLKQDIVEGTDLVIVRELTSGIYFGEPSYVKKTEALDSLKYSSQEIERIVRIAFNLANRRRKKLTSVDKENVLSSSKLWRQIVNDVKKDYPEVEVNHMLVDACSMHLITQPTQFDVIVTENLFGDILSDEASVIPGSLGLSPSASFGQTGTRLYEPIHGSAPDIANEDKANPFGMVLSLALCLRESLNQNDAANELESIVYSFIQSNKTTADLGGQYRTSKIFKLLKEKYL.

Residue 76 to 87 (GPKWTDPNNRPE) coordinates NAD(+). Substrate-binding residues include arginine 94, arginine 104, arginine 132, and aspartate 217. Positions 217, 241, and 245 each coordinate Mg(2+). 275-287 (GSAPDIANEDKAN) serves as a coordination point for NAD(+).

It belongs to the isocitrate and isopropylmalate dehydrogenases family. LeuB type 1 subfamily. As to quaternary structure, homodimer. It depends on Mg(2+) as a cofactor. Mn(2+) serves as cofactor.

It is found in the cytoplasm. It carries out the reaction (2R,3S)-3-isopropylmalate + NAD(+) = 4-methyl-2-oxopentanoate + CO2 + NADH. Its pathway is amino-acid biosynthesis; L-leucine biosynthesis; L-leucine from 3-methyl-2-oxobutanoate: step 3/4. In terms of biological role, catalyzes the oxidation of 3-carboxy-2-hydroxy-4-methylpentanoate (3-isopropylmalate) to 3-carboxy-4-methyl-2-oxopentanoate. The product decarboxylates to 4-methyl-2 oxopentanoate. This is 3-isopropylmalate dehydrogenase from Staphylococcus epidermidis (strain ATCC 12228 / FDA PCI 1200).